Here is a 418-residue protein sequence, read N- to C-terminus: MSIAMRLKVMSFLQYFIWGSWLVTLGSYMINTLHFTGANVGMVYSSKGIAAIIMPGIMGIIADKWLRAERAYMLCHLVCAGVLFYAASVTDPDMMFWVMLVNAMAFMPTIALSNSVSYSCLAQAGLDPVTAFPPIRVFGTVGFIVAMWAVSLLHLELSSLQLYIASGASLLLSAYALTLPKIPVAEKKATTSLASKLGLDAFVLFKNPRMAIFFLFAMMLGAVLQITNVFGNPFLHDFARNPEFADSFVVKYPSILLSVSQMAEVGFILTIPFFLKRFGIKTVMLMSMVAWTLRFGFFAYGDPSTTGFILLLLSMIVYGCAFDFFNISGSVFVEQEVDSSIRASAQGLFMTMVNGVGAWVGSILSGMAVDYFSVDGVKDWQTIWLVFAGYALFLAVIFFFGFKYNHDPEKIKHRAVTH.

Residues 1–9 (MSIAMRLKV) lie on the Cytoplasmic side of the membrane. A helical transmembrane segment spans residues 10–30 (MSFLQYFIWGSWLVTLGSYMI). The Periplasmic portion of the chain corresponds to 31-41 (NTLHFTGANVG). A helical membrane pass occupies residues 42 to 62 (MVYSSKGIAAIIMPGIMGIIA). The Cytoplasmic portion of the chain corresponds to 63 to 70 (DKWLRAER). Transmembrane regions (helical) follow at residues 71 to 91 (AYML…SVTD) and 92 to 112 (PDMM…TIAL). Residues 113 to 136 (SNSVSYSCLAQAGLDPVTAFPPIR) are Cytoplasmic-facing. Residues 137–157 (VFGTVGFIVAMWAVSLLHLEL) form a helical membrane-spanning segment. Residues 158-159 (SS) are Periplasmic-facing. Residues 160–180 (LQLYIASGASLLLSAYALTLP) form a helical membrane-spanning segment. Topologically, residues 181–209 (KIPVAEKKATTSLASKLGLDAFVLFKNPR) are cytoplasmic. Residues 210 to 230 (MAIFFLFAMMLGAVLQITNVF) form a helical membrane-spanning segment. Residues 231 to 254 (GNPFLHDFARNPEFADSFVVKYPS) lie on the Periplasmic side of the membrane. The chain crosses the membrane as a helical span at residues 255–275 (ILLSVSQMAEVGFILTIPFFL). Over 276–277 (KR) the chain is Cytoplasmic. Residues 278–298 (FGIKTVMLMSMVAWTLRFGFF) traverse the membrane as a helical segment. At 299-306 (AYGDPSTT) the chain is on the periplasmic side. Residues 307-327 (GFILLLLSMIVYGCAFDFFNI) traverse the membrane as a helical segment. Residues 328 to 348 (SGSVFVEQEVDSSIRASAQGL) lie on the Cytoplasmic side of the membrane. A helical transmembrane segment spans residues 349–369 (FMTMVNGVGAWVGSILSGMAV). Over 370-381 (DYFSVDGVKDWQ) the chain is Periplasmic. A helical membrane pass occupies residues 382 to 402 (TIWLVFAGYALFLAVIFFFGF). Residues 403–418 (KYNHDPEKIKHRAVTH) lie on the Cytoplasmic side of the membrane.

The protein belongs to the major facilitator superfamily. Nucleoside:H(+) symporter (NHS) (TC 2.A.1.10) family.

It localises to the cell inner membrane. It carries out the reaction xanthosine(in) + H(+)(in) = xanthosine(out) + H(+)(out). Its activity is regulated as follows. Transport is abolished by the proton uncoupler 2,4-dinitrophenol. In terms of biological role, uptake of xanthosine. Can also transport other nucleosides such as inosine, adenosine, cytidine, uridine and thymidine. Transport is driven by a proton motive force. The chain is Xanthosine permease from Escherichia coli (strain K12).